Consider the following 114-residue polypeptide: Lectin MVL (114 aa).

Copy 1 of the repeat occupies 2 to 55 (ASYKVNIPAGPLWSNAEAQQVGPKIAAAHQGNFTGQWTTVVESAMSVVEVELQV). A carbohydrate-binding positions include 12 to 16 (PLWSN), Gln20, and 36 to 44 (GQWTTVVES). A linker region spans residues 56 to 60 (ENTGI). Repeat unit 2 spans residues 61–114 (HEFKTDVLAGPLWSNDEAQKLGPQIAASYGAEFTGQWRTIVEGVMSVIQIKYTF). A carbohydrate-binding positions include 71 to 75 (PLWSN), Gln79, and 95 to 103 (GQWRTIVEG).

As to quaternary structure, homodimer.

The protein localises to the cytoplasm. Its function is as follows. Carbohydrate-binding protein that binds oligomannosides such as Man(6)GlcNAc(2) with sub-micromolar affinities. The specificity of MVL is unique in that its minimal target comprises the Man-alpha-(1-&gt;6)-Man-beta-(1-&gt;4)-GlcNAc-beta-(1-&gt;4)-GlcNAc tetrasaccharide core (Man(2)A) found in N-linked oligomannosides. Displays hemagglutininating activity on rabbit, horse and hen erythrocytes. This activity is inhibited by yeast mannan. Does not bind mono- and disaccharides. Inhibits HIV-1 envelope-mediated cell fusion at nanomolar concentrations through carbohydrate-mediated interactions with high-mannose residues on the surface of the HIV envelope glycoprotein gp120. Unexpectedly for a lectin, one of the 2 oligomannose binding sites of MVL can catalyze the cleavage of chitin fragments (such as chitotriose, i.e. GlcNAc(3) or GlcNAc-beta-(1-&gt;4)-GlcNAcbeta-(1-&gt;4)-GlcNAc, and chitotetraose, i.e. GlcNAc(4)) to GlcNAc. This weak beta-1,4-glycosidase activity is restricted to the C-terminal carbohydrate-binding site. Does not cleave Man(3)GlcNAc(2) or the tetrasaccharide Man(2)A. The protein is Lectin MVL (mvl) of Microcystis viridis (Polycystis viridis).